The primary structure comprises 344 residues: Isopentenyl-diphosphate delta-isomerase (344 aa).

9-10 (RK) lines the substrate pocket. FMN-binding positions include 65–67 (AMT), Ser-95, and Asn-124. Gln-154 serves as a coordination point for substrate. Glu-155 is a binding site for Mg(2+). Residues Lys-185, Thr-215, 259-261 (GVR), and 280-281 (SG) each bind FMN.

It belongs to the IPP isomerase type 2 family. In terms of assembly, homooctamer. Dimer of tetramers. FMN is required as a cofactor. Requires NADPH as cofactor. Mg(2+) serves as cofactor.

It localises to the cytoplasm. It carries out the reaction isopentenyl diphosphate = dimethylallyl diphosphate. Its function is as follows. Involved in the biosynthesis of isoprenoids. Catalyzes the 1,3-allylic rearrangement of the homoallylic substrate isopentenyl (IPP) to its allylic isomer, dimethylallyl diphosphate (DMAPP). This Lacticaseibacillus paracasei (strain ATCC 334 / BCRC 17002 / CCUG 31169 / CIP 107868 / KCTC 3260 / NRRL B-441) (Lactobacillus paracasei) protein is Isopentenyl-diphosphate delta-isomerase.